The chain runs to 158 residues: EOLA-like protein (158 aa).

The region spanning 6 to 92 is the ASCH domain; sequence LSFRQPYAGF…IAGLVDIGET (87 aa).

This sequence belongs to the EOLA family.

The polypeptide is EOLA-like protein (Pongo abelii (Sumatran orangutan)).